The following is a 270-amino-acid chain: GTP cyclohydrolase FolE2 (270 aa).

It belongs to the GTP cyclohydrolase IV family.

The enzyme catalyses GTP + H2O = 7,8-dihydroneopterin 3'-triphosphate + formate + H(+). It participates in cofactor biosynthesis; 7,8-dihydroneopterin triphosphate biosynthesis; 7,8-dihydroneopterin triphosphate from GTP: step 1/1. Functionally, converts GTP to 7,8-dihydroneopterin triphosphate. This chain is GTP cyclohydrolase FolE2, found in Cupriavidus pinatubonensis (strain JMP 134 / LMG 1197) (Cupriavidus necator (strain JMP 134)).